Here is a 751-residue protein sequence, read N- to C-terminus: Ecdysteroid-phosphate phosphatase (751 aa).

The region spanning 16–60 is the UBA domain; the sequence is CISKQHLTPLQTLLQMGFPRHRAEKALASTGNRGVQIASDWLLAH. In terms of domain architecture, SH3 spans 271–336; that stretch reads ATKQVQKVVY…PVNYTERTAE (66 aa). Disordered stretches follow at residues 367–394 and 458–484; these read GRSISTEPDDRQNTAHPDIIEGSSFEES and EPPAAQPPRPDDTLSVHSDHSLHPGSL. Over residues 466–479 the composition is skewed to basic and acidic residues; sequence RPDDTLSVHSDHSL. The segment at 490–751 is phosphatase-like; sequence KNRKIYIMRH…RFEWNALSAT (262 aa). The active site involves Arg498. His499 acts as the Tele-phosphohistidine intermediate in catalysis. His681 is an active-site residue.

It localises to the cytoplasm. It is found in the cytosol. The protein localises to the nucleus. The catalysed reaction is ecdysone 22-phosphate + H2O = ecdysone + phosphate. It catalyses the reaction 20-hydroxyecdysone 22-phosphate + H2O = 20-hydroxyecdysone + phosphate. The enzyme catalyses 2-deoxyecdysone 22-phosphate + H2O = 2-deoxyecdysone + phosphate. Its function is as follows. Steroid phosphatase that dephosphorylates ecdysteroids such as ecdysone 22-phosphate (E22P), 3-epi-ecdysone 22-phosphate (E22P) and 3-epi-ecdysone 2-phosphate (E2P). Likely catalyzes the conversion of inactive phosphorylated ecdysteroids into their active forms. Shows high activity towards ecdysone 22-phosphate (E22P), but is also significantly active against 3-epi-ecdysone 22-phosphate (E22P) and 3-epi-ecdysone 2-phosphate (E2P). Also displays acid phosphatase activity towards 4-nitrophenyl phosphate (pNNP) in vitro. Has no activity towards 3-epi-ecdysone 3-phosphate (E3P). This Drosophila melanogaster (Fruit fly) protein is Ecdysteroid-phosphate phosphatase.